The primary structure comprises 180 residues: Early nodulin-16 (180 aa).

Residues 1–22 (MASSSPILLMIIFSMWLLISHS) form the signal peptide. One can recognise a Phytocyanin domain in the interval 25 to 129 (TDYLIGDSHN…GLKLAVVVQN (105 aa)). N-linked (GlcNAc...) asparagine glycosylation occurs at asparagine 67. A disulfide bond links cysteine 83 and cysteine 117. The N-linked (GlcNAc...) asparagine glycan is linked to asparagine 152. Residue serine 154 is the site of GPI-anchor amidated serine attachment. The propeptide at 155-180 (GNKGGAAGLGFIMWLGVSLVMMMFLI) is removed in mature form.

It belongs to the early nodulin-like (ENODL) family. As to expression, expressed in developing nodules upon symbiosis with Sinorhizobium meliloti.

It is found in the symbiosome. The protein localises to the cell membrane. May act as a carbohydrate transporter. The protein is Early nodulin-16 of Medicago truncatula (Barrel medic).